The primary structure comprises 502 residues: MKIAVIGAGVTGLAAAARIASQGHEVTIFEKNNNVGGCMNQLKKDGFTFDMGPTIVMMPDVYKDVFTACGKNYEDYIELRQLRYIYDVYFDHDDRITVPTDLAELQQMLESIEPGSTHGFMSFLTDVYKKYEIARRYFLERTYRKPSDFYNMTSLVQGAKLKTLNHADQLIEHYIDNEKIQKLLAFQTLYIGIDPKRGPSLYSIIPMIEMMFGVHFIKGGMYGMAQGLAQLNKDLGVNIELNAEIEQIIIDPKFKRADAIKVNGDIRKFDKILCTADFPSVAESLMPDFAPIKKYPPHKIADLDYSCSAFLMYIGIDIDVTDQVRLHNVIFSDDFRGNIEEIFEGRLSYDPSIYVYVPAVADKSLAPEGKTGIYVLMPTPELKTGSGIDWSDEALTQQIKEIIYRKLATIEVFEDIKSHIVSETIFTPNDFEQTYHAKFGSAFGLMPTLAQSNYYRPQNVSRDYKDLYFAGASTHPGAGVPIVLTSAKITVDEMIKDIERGV.

Residue 5 to 17 participates in FAD binding; it reads VIGAGVTGLAAAA.

Belongs to the carotenoid/retinoid oxidoreductase family. CrtN subfamily.

It catalyses the reaction 15-cis-4,4'-diapophytoene + 3 FAD + 3 H(+) = all-trans-4,4'-diaponeurosporene + 3 FADH2. It functions in the pathway carotenoid biosynthesis; staphyloxanthin biosynthesis; staphyloxanthin from farnesyl diphosphate: step 2/5. Functionally, involved in the biosynthesis of the yellow-orange carotenoid staphyloxanthin, which plays a role in the virulence via its protective function against oxidative stress. Catalyzes three successive dehydrogenation reactions that lead to the introduction of three double bonds into 4,4'-diapophytoene (dehydrosqualene), with 4,4'-diapophytofluene and 4,4'-diapo-zeta-carotene as intermediates, and 4,4'-diaponeurosporene (the major deep-yellow pigment in staphylococci strains) as the end product. The sequence is that of 4,4'-diapophytoene desaturase (4,4'-diaponeurosporene-forming) from Staphylococcus aureus (strain COL).